The following is a 58-amino-acid chain: Large ribosomal subunit protein bL32 (58 aa).

The protein belongs to the bacterial ribosomal protein bL32 family.

This Prochlorococcus marinus (strain MIT 9515) protein is Large ribosomal subunit protein bL32.